The primary structure comprises 134 residues: NADH-quinone oxidoreductase subunit A (134 aa).

A run of 3 helical transmembrane segments spans residues 12–32 (FAIY…LAAL), 64–84 (FYLV…LFAW), and 93–113 (WVGF…LLYL).

This sequence belongs to the complex I subunit 3 family. As to quaternary structure, NDH-1 is composed of 14 different subunits. Subunits NuoA, H, J, K, L, M, N constitute the membrane sector of the complex.

The protein localises to the cell inner membrane. It catalyses the reaction a quinone + NADH + 5 H(+)(in) = a quinol + NAD(+) + 4 H(+)(out). In terms of biological role, NDH-1 shuttles electrons from NADH, via FMN and iron-sulfur (Fe-S) centers, to quinones in the respiratory chain. The immediate electron acceptor for the enzyme in this species is believed to be ubiquinone. Couples the redox reaction to proton translocation (for every two electrons transferred, four hydrogen ions are translocated across the cytoplasmic membrane), and thus conserves the redox energy in a proton gradient. The protein is NADH-quinone oxidoreductase subunit A of Aeromonas salmonicida (strain A449).